The primary structure comprises 317 residues: Acetyl-coenzyme A carboxylase carboxyl transferase subunit alpha (317 aa).

The CoA carboxyltransferase C-terminal domain occupies 37–292 (RLEKKAEKLR…RICLKKHLDD (256 aa)).

It belongs to the AccA family. As to quaternary structure, acetyl-CoA carboxylase is a heterohexamer composed of biotin carboxyl carrier protein (AccB), biotin carboxylase (AccC) and two subunits each of ACCase subunit alpha (AccA) and ACCase subunit beta (AccD).

The protein resides in the cytoplasm. The catalysed reaction is N(6)-carboxybiotinyl-L-lysyl-[protein] + acetyl-CoA = N(6)-biotinyl-L-lysyl-[protein] + malonyl-CoA. Its pathway is lipid metabolism; malonyl-CoA biosynthesis; malonyl-CoA from acetyl-CoA: step 1/1. In terms of biological role, component of the acetyl coenzyme A carboxylase (ACC) complex. First, biotin carboxylase catalyzes the carboxylation of biotin on its carrier protein (BCCP) and then the CO(2) group is transferred by the carboxyltransferase to acetyl-CoA to form malonyl-CoA. The polypeptide is Acetyl-coenzyme A carboxylase carboxyl transferase subunit alpha (Syntrophotalea carbinolica (strain DSM 2380 / NBRC 103641 / GraBd1) (Pelobacter carbinolicus)).